Here is a 922-residue protein sequence, read N- to C-terminus: Periodic tryptophan protein 2 homolog (922 aa).

WD repeat units follow at residues 12 to 52 (GTVY…TLPI), 53 to 92 (QSKY…VLGE), 94 to 132 (KFFK…KQPN), 141 to 180 (THKS…VSYF), 182 to 221 (VKGS…EMEQ), 271 to 310 (GVKC…QLYK), 313 to 353 (ISSH…YILK), 356 to 395 (GHSY…CYIT), 398 to 439 (EHEG…NFRT), 443 to 485 (PNKT…DILS), 486 to 525 (GHQS…EIRE), 528 to 567 (QHTS…QIGL), 590 to 629 (SAGR…LIKK), and 691 to 731 (KKKQ…DPTD). Positions 893–922 (ESKKNKEQEEDQFSDDEETVYQNNKKNKNK) are disordered. The segment covering 900-911 (QEEDQFSDDEET) has biased composition (acidic residues).

Belongs to the WD repeat PWP2 family. Part of the small subunit (SSU) processome, composed of more than 70 proteins and the RNA chaperone small nucleolar RNA (snoRNA) U3.

The protein resides in the nucleus. It is found in the nucleolus. In terms of biological role, part of the small subunit (SSU) processome, first precursor of the small eukaryotic ribosomal subunit. During the assembly of the SSU processome in the nucleolus, many ribosome biogenesis factors, an RNA chaperone and ribosomal proteins associate with the nascent pre-rRNA and work in concert to generate RNA folding, modifications, rearrangements and cleavage as well as targeted degradation of pre-ribosomal RNA by the RNA exosome. The protein is Periodic tryptophan protein 2 homolog (pwp2) of Dictyostelium discoideum (Social amoeba).